The sequence spans 248 residues: Ubiquinone biosynthesis O-methyltransferase (248 aa).

R41, G72, D93, and M136 together coordinate S-adenosyl-L-methionine.

This sequence belongs to the methyltransferase superfamily. UbiG/COQ3 family.

The enzyme catalyses a 3-demethylubiquinol + S-adenosyl-L-methionine = a ubiquinol + S-adenosyl-L-homocysteine + H(+). It carries out the reaction a 3-(all-trans-polyprenyl)benzene-1,2-diol + S-adenosyl-L-methionine = a 2-methoxy-6-(all-trans-polyprenyl)phenol + S-adenosyl-L-homocysteine + H(+). It participates in cofactor biosynthesis; ubiquinone biosynthesis. O-methyltransferase that catalyzes the 2 O-methylation steps in the ubiquinone biosynthetic pathway. This is Ubiquinone biosynthesis O-methyltransferase from Rhizobium johnstonii (strain DSM 114642 / LMG 32736 / 3841) (Rhizobium leguminosarum bv. viciae).